Here is a 494-residue protein sequence, read N- to C-terminus: Cardiolipin synthase (494 aa).

2 consecutive transmembrane segments (helical) span residues 14–34 (IILNSIFIGAFILNLLFAFTI) and 45–65 (IWAWLLVLVFLPLFGFILYLL). 2 PLD phosphodiesterase domains span residues 229 to 256 (MNNRNHRKIVVIDGQIGYVGGFNVGDEY) and 407 to 434 (DNGFLHSKTLVIDDEIASVGTANMDHRS). Catalysis depends on residues H234, K236, D241, H412, K414, and D419.

Belongs to the phospholipase D family. Cardiolipin synthase subfamily.

It localises to the cell membrane. The catalysed reaction is 2 a 1,2-diacyl-sn-glycero-3-phospho-(1'-sn-glycerol) = a cardiolipin + glycerol. Functionally, catalyzes the reversible phosphatidyl group transfer from one phosphatidylglycerol molecule to another to form cardiolipin (CL) (diphosphatidylglycerol) and glycerol. In Staphylococcus aureus (strain Mu50 / ATCC 700699), this protein is Cardiolipin synthase (cls).